A 90-amino-acid chain; its full sequence is Acylphosphatase (90 aa).

The Acylphosphatase-like domain occupies 4-90 (RWRFLIEGSV…TGNDWFDVRT (87 aa)). Catalysis depends on residues Arg-19 and Asn-37.

The protein belongs to the acylphosphatase family.

The catalysed reaction is an acyl phosphate + H2O = a carboxylate + phosphate + H(+). The polypeptide is Acylphosphatase (acyP) (Synechococcus sp. (strain CC9311)).